Reading from the N-terminus, the 436-residue chain is bZIP transcription factor RISBZ1 (436 aa).

Residues 1-27 (MEHVFAVDEIPDPLWAPPPPVQPAAAA) are required for transactivation activity. Positions 182-258 (LSPGPNGGSG…SARRSRSRKA (77 aa)) are disordered. The segment covering 215–225 (PSEDDDMEGDA) has biased composition (acidic residues). In terms of domain architecture, bZIP spans 236–299 (EDKVKKRKES…SAAAIDNRVL (64 aa)). The tract at residues 238-257 (KVKKRKESNRESARRSRSRK) is basic motif. The leucine-zipper stretch occupies residues 264-278 (LEEQVSLLRVENSSL).

In terms of assembly, homodimer. Forms heterodimers with RISBZ2/BZP33 and RISBZ3/BZP20. Interacts with DOF3/RPBF. As to expression, specifically expressed in seeds. Expressed in aleurone and subaleurone layers of maturing seeds, but not in the embryo tissues.

The protein localises to the nucleus. Functionally, transcriptional activator that binds to the DNA specific sequence 5'-TGAGTCA-3' found in seed storage protein gene promoters. Involved in the endosperm-specific regulation of storage protein genes. Can activate the expression of genes encoding for the seed storage proteins glutelin, prolamin, globulin and the allergen RAG1. Functions synergistically with DOF3/RPBF to positively regulate quantitatively many seed storage protein genes. Functions synergistically with DOF3/RPBF to positively regulate some metabolic enzymes, such as alanine aminotransferase and pyruvate phosphate dikinase, that are expressed in developing seeds. Functions synergistically with DOF3/RPBF to positively regulate genes that are key players in the development of aleurone layers. Functions synergistically with DOF3/RPBF to positively regulate the glutelin GLUD-1 gene in endosperm of developing seeds. Can activate the expression of the bifunctional lysine-degrading enzyme, lysine ketoglutarate reductase/saccharopine dehydrogenase (LKR/SDH), one of the key regulators determining free lysine content in plants. Functions as a key regulator of starch synthesis in seeds, by direct binding to the promoters of starch-synthesizing genes, such as AGPL3, WAXXY and SBE1. In Oryza sativa subsp. japonica (Rice), this protein is bZIP transcription factor RISBZ1.